Consider the following 306-residue polypeptide: Oligopeptide transport system permease protein OppB (306 aa).

Residues 1–12 (MLKFILRRCLEA) are Cytoplasmic-facing. A helical transmembrane segment spans residues 13 to 30 (IPTLFILITISFFMMRLA). At 31-101 (PGSPFTGERA…ASFPVSAKLG (71 aa)) the chain is on the periplasmic side. An ABC transmembrane type-1 domain is found at 94–293 (FPVSAKLGAA…ALTILFNAIV (200 aa)). The chain crosses the membrane as a helical span at residues 102–121 (AAAFLLAVIIGVSAGVIAAL). Over 122–133 (KQNTRWDYTVMG) the chain is Cytoplasmic. A helical transmembrane segment spans residues 134-156 (FAMTGVVIPSFVVAPLLVMVFAI). Topologically, residues 157 to 165 (TLQWLPGGG) are periplasmic. Residues 166 to 188 (WNGGALKFMILPMVALSLAYIAS) traverse the membrane as a helical segment. The Cytoplasmic segment spans residues 189–227 (IARITRGSMIEVLHSNFIRTARAKGLPMRRIIFRHALKP). Residues 228-250 (ALLPVLSYMGPAFVGIITGSMVI) traverse the membrane as a helical segment. Over 251-277 (ETIYGLPGIGQLFVNGALNRDYSLVLS) the chain is Periplasmic. A helical transmembrane segment spans residues 278–300 (LTILVGALTILFNAIVDVLYAVI). Residues 301 to 306 (DPKIRY) are Cytoplasmic-facing.

The protein belongs to the binding-protein-dependent transport system permease family. OppBC subfamily. As to quaternary structure, the complex is composed of two ATP-binding proteins (OppD and OppF), two transmembrane proteins (OppB and OppC) and a solute-binding protein (OppA).

The protein resides in the cell inner membrane. In terms of biological role, part of the ABC transporter complex OppABCDF involved in the uptake of oligopeptides, including the cell wall murein tripeptide L-alanyl-gamma-D-glutamyl-meso-diaminopimelate. Responsible for the translocation of the substrate across the membrane. Plays an important nutritional role and is involved in the recycling of cell wall peptides. The chain is Oligopeptide transport system permease protein OppB from Salmonella typhimurium (strain LT2 / SGSC1412 / ATCC 700720).